The following is a 243-amino-acid chain: Carboxy-S-adenosyl-L-methionine synthase (243 aa).

S-adenosyl-L-methionine is bound by residues Tyr-40, 65-67, 90-91, 118-119, Asn-133, and Arg-200; these read GCS, DN, and DI.

It belongs to the class I-like SAM-binding methyltransferase superfamily. Cx-SAM synthase family. As to quaternary structure, homodimer.

The enzyme catalyses prephenate + S-adenosyl-L-methionine = carboxy-S-adenosyl-L-methionine + 3-phenylpyruvate + H2O. Its function is as follows. Catalyzes the conversion of S-adenosyl-L-methionine (SAM) to carboxy-S-adenosyl-L-methionine (Cx-SAM). This Shewanella pealeana (strain ATCC 700345 / ANG-SQ1) protein is Carboxy-S-adenosyl-L-methionine synthase.